The following is a 198-amino-acid chain: Na(+)-translocating NADH-quinone reductase subunit E (198 aa).

A run of 6 helical transmembrane segments spans residues 11-31 (SVFI…FLAV), 35-55 (VSTA…SVPV), 77-97 (FLNF…LEMF), 110-130 (GIFL…SFMV), 140-160 (VVYG…LAGL), and 176-196 (LGIT…FSGI).

This sequence belongs to the NqrDE/RnfAE family. Composed of six subunits; NqrA, NqrB, NqrC, NqrD, NqrE and NqrF.

Its subcellular location is the cell inner membrane. It catalyses the reaction a ubiquinone + n Na(+)(in) + NADH + H(+) = a ubiquinol + n Na(+)(out) + NAD(+). Functionally, NQR complex catalyzes the reduction of ubiquinone-1 to ubiquinol by two successive reactions, coupled with the transport of Na(+) ions from the cytoplasm to the periplasm. NqrA to NqrE are probably involved in the second step, the conversion of ubisemiquinone to ubiquinol. This chain is Na(+)-translocating NADH-quinone reductase subunit E, found in Mannheimia succiniciproducens (strain KCTC 0769BP / MBEL55E).